A 380-amino-acid chain; its full sequence is Large ribosomal subunit protein mL38 (380 aa).

The transit peptide at 1–26 directs the protein to the mitochondrion; the sequence is MAAPWWRAALCECRRWRGFSTSAVLG. The stretch at 99–127 forms a coiled coil; the sequence is RTQQLLERKQAIQELRANVEEERAARLRT.

It belongs to the phosphatidylethanolamine-binding protein family. Mitochondrion-specific ribosomal protein mL38 subfamily. In terms of assembly, component of the mitochondrial large ribosomal subunit (mt-LSU). Mature mammalian 55S mitochondrial ribosomes consist of a small (28S) and a large (39S) subunit. The 28S small subunit contains a 12S ribosomal RNA (12S mt-rRNA) and 30 different proteins. The 39S large subunit contains a 16S rRNA (16S mt-rRNA), a copy of mitochondrial valine transfer RNA (mt-tRNA(Val)), which plays an integral structural role, and 52 different proteins. mL38 is located at the central protuberance.

The protein resides in the mitochondrion. The sequence is that of Large ribosomal subunit protein mL38 (MRPL38) from Homo sapiens (Human).